Reading from the N-terminus, the 363-residue chain is MGFKCGIVGLPNVGKSTLFNALTKAGIEAANFPFCTIEPNTGVVPMPDPRLDQLAEIVKPQRTLPTTMEFVDIAGLVKGASKGEGLGNQFLTNIRETEAIGHVVRCFENDNIIHVSGKVNPADDIEVINTELALADLDTCERAIHRVQKKAKGGDKDAKAELAVLEKCLPQLENAGMLRALDLSAEEKAAIRYLSFLTLKPTMYIANVNEDGFENNPYLDQVREIAAKEGSVVVPVCAAVEADIAELDDEERDEFMQELGLEEPGLNRVIRAGYKLLNLQTYFTAGVKEVRAWTIPVGATAPQAAGKIHTDFEKGFIRAQTISFEDFITYKGEQGAKEAGKMRAEGKDYIVKDGDVMNFLFNV.

The OBG-type G domain maps to 3–256 (FKCGIVGLPN…LDDEERDEFM (254 aa)). Residue 12-17 (NVGKST) participates in ATP binding. Mg(2+)-binding residues include Ser-16 and Thr-36. In terms of domain architecture, TGS spans 278-361 (NLQTYFTAGV…KDGDVMNFLF (84 aa)).

It belongs to the TRAFAC class OBG-HflX-like GTPase superfamily. OBG GTPase family. YchF/OLA1 subfamily. Mg(2+) is required as a cofactor.

Functionally, ATPase that binds to both the 70S ribosome and the 50S ribosomal subunit in a nucleotide-independent manner. This Escherichia coli O157:H7 protein is Ribosome-binding ATPase YchF.